The chain runs to 382 residues: Type 2 DNA topoisomerase 6 subunit A (382 aa).

The 142-residue stretch at 14 to 155 (YDPQKVLKKL…MHITADRRGY (142 aa)) folds into the Topo IIA-type catalytic domain. The active-site O-(5'-phospho-DNA)-tyrosine intermediate is the Tyr108. The Mg(2+) site is built by Glu202 and Asp254.

The protein belongs to the TOP6A family. Homodimer. Heterotetramer of two Top6A and two Top6B chains. Mg(2+) serves as cofactor.

The catalysed reaction is ATP-dependent breakage, passage and rejoining of double-stranded DNA.. Functionally, relaxes both positive and negative superturns and exhibits a strong decatenase activity. The chain is Type 2 DNA topoisomerase 6 subunit A from Pyrococcus horikoshii (strain ATCC 700860 / DSM 12428 / JCM 9974 / NBRC 100139 / OT-3).